The primary structure comprises 130 residues: Small ribosomal subunit protein uS11 (130 aa).

The protein belongs to the universal ribosomal protein uS11 family. As to quaternary structure, part of the 30S ribosomal subunit. Interacts with proteins S7 and S18. Binds to IF-3.

Its function is as follows. Located on the platform of the 30S subunit, it bridges several disparate RNA helices of the 16S rRNA. Forms part of the Shine-Dalgarno cleft in the 70S ribosome. This chain is Small ribosomal subunit protein uS11, found in Prochlorococcus marinus (strain MIT 9303).